Reading from the N-terminus, the 363-residue chain is LLWLLLLPTLCGLGAADWSAPSLACARGPAFWCQSLEQALQCRALGHCLQEVWGNARADDLCQECQDIVRILTKMTKEAIFQDMVRKFLEHECDVLPLKLLTPQCHHMLGTYFPVVVDYFQSQINPKIICKHLGLCKPGLPEPEQESELSDPLLDKLILPELPGALQVTGPHTQDLSEQQLPIPLPYCWLCRTLIKRIQAMIPKGVLAVTVGQVCHVVPLVVGGICQCLGERYTVLLLDALLGRMLPQLVCGLVLRCSHEDSAGPALASLPSEWSPQESKCQLCMFVTTQAGNHSEQATPQAIRQACLSSWLDRQKCEQFVEQHMPRLQTLASGGRDAHTTCQALGACRTTFSPLQCIHIPHF.

Residues 1-16 (LLWLLLLPTLCGLGAA) form the signal peptide. A propeptide spanning residues 17–180 (DWSAPSLACA…PHTQDLSEQQ (164 aa)) is cleaved from the precursor. The Saposin A-type domain occupies 18 to 58 (WSAPSLACARGPAFWCQSLEQALQCRALGHCLQEVWGNARA). Saposin B-type domains lie at 58–140 (ADDL…KPGL), 184–261 (PLPY…SHED), and 277–352 (QESK…RTTF). 9 disulfide bridges follow: Cys62–Cys136, Cys65–Cys130, Cys93–Cys105, Cys188–Cys257, Cys191–Cys251, Cys215–Cys226, Cys281–Cys348, Cys284–Cys342, and Cys307–Cys317. Residues 260 to 363 (EDSAGPALAS…PLQCIHIPHF (104 aa)) constitute a propeptide that is removed on maturation. Residue Asn293 is glycosylated (N-linked (GlcNAc...) asparagine).

Homodimer; disulfide-linked.

The protein resides in the secreted. Its subcellular location is the extracellular space. It is found in the surface film. Functionally, pulmonary surfactant-associated proteins promote alveolar stability by lowering the surface tension at the air-liquid interface in the peripheral air spaces. SP-B increases the collapse pressure of palmitic acid to nearly 70 millinewtons per meter. This is Pulmonary surfactant-associated protein B (SFTPB) from Canis lupus familiaris (Dog).